A 236-amino-acid chain; its full sequence is DNA repair and recombination protein RadB (236 aa).

Belongs to the eukaryotic RecA-like protein family. RadB subfamily.

Involved in DNA repair and in homologous recombination. May regulate the cleavage reactions of the branch-structured DNA. Has a very weak ATPase activity that is not stimulated by DNA. Binds DNA but does not promote DNA strands exchange. In Halobacterium salinarum (strain ATCC 29341 / DSM 671 / R1), this protein is DNA repair and recombination protein RadB.